Consider the following 201-residue polypeptide: 3-isopropylmalate dehydratase small subunit (201 aa).

The protein belongs to the LeuD family. LeuD type 1 subfamily. Heterodimer of LeuC and LeuD.

It catalyses the reaction (2R,3S)-3-isopropylmalate = (2S)-2-isopropylmalate. It functions in the pathway amino-acid biosynthesis; L-leucine biosynthesis; L-leucine from 3-methyl-2-oxobutanoate: step 2/4. Its function is as follows. Catalyzes the isomerization between 2-isopropylmalate and 3-isopropylmalate, via the formation of 2-isopropylmaleate. This Salmonella paratyphi A (strain ATCC 9150 / SARB42) protein is 3-isopropylmalate dehydratase small subunit.